A 101-amino-acid chain; its full sequence is MNGTDILRFLQSSPTISYSKHFILITACPLFVLGLLLLGLRTAMFKQVRGKTTTSRNRGVIAAKLLVAWYLATIVMYIAKSEMWKYAFAVSLLLNSLALFF.

Transmembrane regions (helical) follow at residues 20–40 (KHFI…LLGL), 59–79 (GVIA…MYIA), and 81–101 (SEMW…ALFF).

It is found in the endoplasmic reticulum. The protein localises to the membrane. This is an uncharacterized protein from Saccharomyces cerevisiae (strain ATCC 204508 / S288c) (Baker's yeast).